Here is a 316-residue protein sequence, read N- to C-terminus: 4-hydroxy-3-methylbut-2-enyl diphosphate reductase (316 aa).

Residue Cys-12 participates in [4Fe-4S] cluster binding. 2 residues coordinate (2E)-4-hydroxy-3-methylbut-2-enyl diphosphate: His-41 and His-74. Dimethylallyl diphosphate contacts are provided by His-41 and His-74. Residues His-41 and His-74 each coordinate isopentenyl diphosphate. Cys-96 contributes to the [4Fe-4S] cluster binding site. A (2E)-4-hydroxy-3-methylbut-2-enyl diphosphate-binding site is contributed by His-124. His-124 serves as a coordination point for dimethylallyl diphosphate. Residue His-124 participates in isopentenyl diphosphate binding. Catalysis depends on Glu-126, which acts as the Proton donor. Thr-168 is a binding site for (2E)-4-hydroxy-3-methylbut-2-enyl diphosphate. Cys-198 provides a ligand contact to [4Fe-4S] cluster. (2E)-4-hydroxy-3-methylbut-2-enyl diphosphate-binding residues include Ser-226, Ser-227, Asn-228, and Ser-270. Residues Ser-226, Ser-227, Asn-228, and Ser-270 each contribute to the dimethylallyl diphosphate site. Residues Ser-226, Ser-227, Asn-228, and Ser-270 each contribute to the isopentenyl diphosphate site.

The protein belongs to the IspH family. [4Fe-4S] cluster serves as cofactor.

The enzyme catalyses isopentenyl diphosphate + 2 oxidized [2Fe-2S]-[ferredoxin] + H2O = (2E)-4-hydroxy-3-methylbut-2-enyl diphosphate + 2 reduced [2Fe-2S]-[ferredoxin] + 2 H(+). It catalyses the reaction dimethylallyl diphosphate + 2 oxidized [2Fe-2S]-[ferredoxin] + H2O = (2E)-4-hydroxy-3-methylbut-2-enyl diphosphate + 2 reduced [2Fe-2S]-[ferredoxin] + 2 H(+). It participates in isoprenoid biosynthesis; dimethylallyl diphosphate biosynthesis; dimethylallyl diphosphate from (2E)-4-hydroxy-3-methylbutenyl diphosphate: step 1/1. It functions in the pathway isoprenoid biosynthesis; isopentenyl diphosphate biosynthesis via DXP pathway; isopentenyl diphosphate from 1-deoxy-D-xylulose 5-phosphate: step 6/6. Functionally, catalyzes the conversion of 1-hydroxy-2-methyl-2-(E)-butenyl 4-diphosphate (HMBPP) into a mixture of isopentenyl diphosphate (IPP) and dimethylallyl diphosphate (DMAPP). Acts in the terminal step of the DOXP/MEP pathway for isoprenoid precursor biosynthesis. The sequence is that of 4-hydroxy-3-methylbut-2-enyl diphosphate reductase from Acinetobacter baumannii (strain AB307-0294).